The following is a 332-amino-acid chain: Phosphoribosylformylglycinamidine cyclo-ligase (332 aa).

It belongs to the AIR synthase family.

Its subcellular location is the cytoplasm. The catalysed reaction is 2-formamido-N(1)-(5-O-phospho-beta-D-ribosyl)acetamidine + ATP = 5-amino-1-(5-phospho-beta-D-ribosyl)imidazole + ADP + phosphate + H(+). The protein operates within purine metabolism; IMP biosynthesis via de novo pathway; 5-amino-1-(5-phospho-D-ribosyl)imidazole from N(2)-formyl-N(1)-(5-phospho-D-ribosyl)glycinamide: step 2/2. The sequence is that of Phosphoribosylformylglycinamidine cyclo-ligase from Clostridium acetobutylicum (strain ATCC 824 / DSM 792 / JCM 1419 / IAM 19013 / LMG 5710 / NBRC 13948 / NRRL B-527 / VKM B-1787 / 2291 / W).